We begin with the raw amino-acid sequence, 304 residues long: Killer cell immunoglobulin-like receptor 2DS5 (304 aa).

An N-terminal signal peptide occupies residues Met1–Pro21. Over His22–His245 the chain is Extracellular. Ig-like C2-type domains are found at residues Glu42 to Ser107 and Gly142 to Ser205. 2 cysteine pairs are disulfide-bonded: Cys49–Cys100 and Cys149–Cys198. 4 N-linked (GlcNAc...) asparagine glycosylation sites follow: Asn67, Asn84, Asn178, and Asn223. Residues Val246 to Leu264 form a helical membrane-spanning segment. The Cytoplasmic portion of the chain corresponds to Leu265–Ala304. Residues Ala275–Ala304 are disordered. The segment covering Val288–Ala304 has biased composition (basic and acidic residues).

This sequence belongs to the immunoglobulin superfamily. Interacts with TYROBP. N-glycosylated, glycosylation varies depending on the allele which alters cell surface expression levels. In terms of tissue distribution, expressed on a discrete subset of peripheral blood NK cells.

It is found in the cell membrane. Activating natural killer (NK) receptor that recognizes C2 epitopes of HLA-C alleles. Bridging the innate and adaptive immune systems, NK cells express a number of cell surface receptors which either inhibit or stimulate their cytotoxicity. Able to activate NK cells citotoxicity and cytokine production such as IFNG. Receptor functions are attenuated even lost in some alleles, such as KIR2DS5*002 represented in this entry. The polypeptide is Killer cell immunoglobulin-like receptor 2DS5 (Homo sapiens (Human)).